Here is a 223-residue protein sequence, read N- to C-terminus: ATP synthase subunit a 1 (223 aa).

The next 5 helical transmembrane spans lie at 20–40 (QTIV…AFLT), 78–98 (YLSY…FTII), 107–127 (SLST…LYGI), 173–193 (VMII…LMSV), and 194–214 (LGLL…TVYI).

This sequence belongs to the ATPase A chain family. As to quaternary structure, F-type ATPases have 2 components, CF(1) - the catalytic core - and CF(0) - the membrane proton channel. CF(1) has five subunits: alpha(3), beta(3), gamma(1), delta(1), epsilon(1). CF(0) has four main subunits: a, b, b' and c.

The protein localises to the cell inner membrane. Its function is as follows. Key component of the proton channel; it plays a direct role in the translocation of protons across the membrane. The protein is ATP synthase subunit a 1 of Prosthecochloris aestuarii (strain DSM 271 / SK 413).